We begin with the raw amino-acid sequence, 654 residues long: C6 finger domain transcription factor nscR (654 aa).

Positions Cys-17–Cys-43 form a DNA-binding region, zn(2)-C6 fungal-type.

It localises to the nucleus. In terms of biological role, transcription factor that specifically regulates the neosartoricin B biosynthesis gene cluster. The chain is C6 finger domain transcription factor nscR from Trichophyton verrucosum (strain HKI 0517).